The chain runs to 225 residues: Rho GDP-dissociation inhibitor 3 (225 aa).

Belongs to the Rho GDI family. Detected only in brain, lung, kidney and testis.

Its subcellular location is the cytoplasm. Inhibits GDP/GTP exchange reaction of RhoB. Interacts specifically with the GDP- and GTP-bound forms of post-translationally processed Rhob and Rhog proteins, both of which show a growth-regulated expression in mammalian cells. Stimulates the release of the GDP-bound but not the GTP-bound RhoB protein. Also inhibits the GDP/GTP exchange of RhoB but shows less ability to inhibit the dissociation of prebound GTP. The protein is Rho GDP-dissociation inhibitor 3 (Arhgdig) of Mus musculus (Mouse).